Here is a 291-residue protein sequence, read N- to C-terminus: Methionine aminopeptidase (291 aa).

A substrate-binding site is contributed by H118. A divalent metal cation contacts are provided by D135, D146, and H209. H216 provides a ligand contact to substrate. A divalent metal cation-binding residues include E241 and E273.

The protein belongs to the peptidase M24A family. Methionine aminopeptidase type 1 subfamily. In terms of assembly, monomer. Requires Co(2+) as cofactor. It depends on Zn(2+) as a cofactor. The cofactor is Mn(2+). Fe(2+) serves as cofactor.

The catalysed reaction is Release of N-terminal amino acids, preferentially methionine, from peptides and arylamides.. Removes the N-terminal methionine from nascent proteins. The N-terminal methionine is often cleaved when the second residue in the primary sequence is small and uncharged (Met-Ala-, Cys, Gly, Pro, Ser, Thr, or Val). Requires deformylation of the N(alpha)-formylated initiator methionine before it can be hydrolyzed. The sequence is that of Methionine aminopeptidase from Chlamydia pneumoniae (Chlamydophila pneumoniae).